Reading from the N-terminus, the 221-residue chain is Endonuclease V (221 aa).

Mg(2+) contacts are provided by aspartate 43 and aspartate 111.

The protein belongs to the endonuclease V family. Mg(2+) serves as cofactor.

Its subcellular location is the cytoplasm. It catalyses the reaction Endonucleolytic cleavage at apurinic or apyrimidinic sites to products with a 5'-phosphate.. Its function is as follows. DNA repair enzyme involved in the repair of deaminated bases. Selectively cleaves double-stranded DNA at the second phosphodiester bond 3' to a deoxyinosine leaving behind the intact lesion on the nicked DNA. This Azotobacter vinelandii (strain DJ / ATCC BAA-1303) protein is Endonuclease V.